The primary structure comprises 418 residues: 3-phosphoshikimate 1-carboxyvinyltransferase (418 aa).

Residues lysine 26, serine 27, and arginine 31 each coordinate 3-phosphoshikimate. Position 26 (lysine 26) interacts with phosphoenolpyruvate. Phosphoenolpyruvate-binding residues include glycine 97 and arginine 125. 6 residues coordinate 3-phosphoshikimate: serine 170, serine 171, glutamine 172, aspartate 297, asparagine 320, and lysine 324. Glutamine 172 contacts phosphoenolpyruvate. Aspartate 297 functions as the Proton acceptor in the catalytic mechanism. Residues arginine 328, arginine 375, and lysine 400 each coordinate phosphoenolpyruvate.

Belongs to the EPSP synthase family. As to quaternary structure, monomer.

The protein localises to the cytoplasm. The catalysed reaction is 3-phosphoshikimate + phosphoenolpyruvate = 5-O-(1-carboxyvinyl)-3-phosphoshikimate + phosphate. The protein operates within metabolic intermediate biosynthesis; chorismate biosynthesis; chorismate from D-erythrose 4-phosphate and phosphoenolpyruvate: step 6/7. Functionally, catalyzes the transfer of the enolpyruvyl moiety of phosphoenolpyruvate (PEP) to the 5-hydroxyl of shikimate-3-phosphate (S3P) to produce enolpyruvyl shikimate-3-phosphate and inorganic phosphate. The sequence is that of 3-phosphoshikimate 1-carboxyvinyltransferase from Pseudomonas savastanoi pv. phaseolicola (strain 1448A / Race 6) (Pseudomonas syringae pv. phaseolicola (strain 1448A / Race 6)).